We begin with the raw amino-acid sequence, 472 residues long: Bifunctional protein HldE (472 aa).

The tract at residues 1-315 is ribokinase; the sequence is MAKRVKILVV…QLLNSSFGAN (315 aa). 192–195 provides a ligand contact to ATP; sequence NKKE. Asp-260 is an active-site residue. The tract at residues 340–472 is cytidylyltransferase; sequence FTNGCFDILH…IKDAKNDDKK (133 aa).

It in the N-terminal section; belongs to the carbohydrate kinase PfkB family. The protein in the C-terminal section; belongs to the cytidylyltransferase family. In terms of assembly, homodimer.

The catalysed reaction is D-glycero-beta-D-manno-heptose 7-phosphate + ATP = D-glycero-beta-D-manno-heptose 1,7-bisphosphate + ADP + H(+). It catalyses the reaction D-glycero-beta-D-manno-heptose 1-phosphate + ATP + H(+) = ADP-D-glycero-beta-D-manno-heptose + diphosphate. It participates in nucleotide-sugar biosynthesis; ADP-L-glycero-beta-D-manno-heptose biosynthesis; ADP-L-glycero-beta-D-manno-heptose from D-glycero-beta-D-manno-heptose 7-phosphate: step 1/4. It functions in the pathway nucleotide-sugar biosynthesis; ADP-L-glycero-beta-D-manno-heptose biosynthesis; ADP-L-glycero-beta-D-manno-heptose from D-glycero-beta-D-manno-heptose 7-phosphate: step 3/4. Catalyzes the phosphorylation of D-glycero-D-manno-heptose 7-phosphate at the C-1 position to selectively form D-glycero-beta-D-manno-heptose-1,7-bisphosphate. In terms of biological role, catalyzes the ADP transfer from ATP to D-glycero-beta-D-manno-heptose 1-phosphate, yielding ADP-D-glycero-beta-D-manno-heptose. The sequence is that of Bifunctional protein HldE from Campylobacter concisus (strain 13826).